The sequence spans 118 residues: Late cornified envelope protein 1B (118 aa).

Residues Cys-87–Cys-118 form a disordered region. The segment covering Pro-90–Ser-103 has biased composition (low complexity). The span at Ser-104–Cys-118 shows a compositional bias: gly residues.

Belongs to the LCE family. In terms of assembly, interacts with CYSRT1; the interaction is direct. Skin-specific. Expression was readily detected in adult trunk skin, adult arm skin, fetal skin, penal skin, vulva, esophagus and tongue. Not expressed in the cervix, rectum, lung, colon, or placenta.

In terms of biological role, precursors of the cornified envelope of the stratum corneum. This Homo sapiens (Human) protein is Late cornified envelope protein 1B (LCE1B).